Reading from the N-terminus, the 157-residue chain is RNA-binding protein 3 (157 aa).

Residues Gly-6 to Lys-84 enclose the RRM domain. At Arg-47 the chain carries Omega-N-methylarginine. The interval His-81–Asn-157 is disordered. Arg-105 carries the asymmetric dimethylarginine; alternate modification. Arg-105 carries the dimethylated arginine; in A2780 ovarian carcinoma cell line modification. An Omega-N-methylarginine; alternate modification is found at Arg-105. The span at Arg-105–Ser-114 shows a compositional bias: gly residues. An omega-N-methylarginine mark is found at Arg-121 and Arg-131. Ser-147 is modified (phosphoserine). Tyr-155 carries the post-translational modification Phosphotyrosine.

As to quaternary structure, interacts with RPL4. Associates with the 60S ribosomal subunits in an RNA-independent manner. Associates with ribosomes. Arg-105 is dimethylated, probably to asymmetric dimethylarginine. In terms of processing, phosphorylated.

The protein resides in the nucleus. The protein localises to the cytoplasm. It is found in the cell projection. Its subcellular location is the dendrite. Its function is as follows. Cold-inducible mRNA binding protein that enhances global protein synthesis at both physiological and mild hypothermic temperatures. Reduces the relative abundance of microRNAs, when overexpressed. Enhances phosphorylation of translation initiation factors and active polysome formation. The chain is RNA-binding protein 3 (RBM3) from Homo sapiens (Human).